We begin with the raw amino-acid sequence, 168 residues long: G/U mismatch-specific DNA glycosylase (168 aa).

The protein belongs to the uracil-DNA glycosylase (UDG) superfamily. TDG/mug family. As to quaternary structure, binds DNA as a monomer.

It localises to the cytoplasm. The catalysed reaction is Specifically hydrolyzes mismatched double-stranded DNA and polynucleotides, releasing free uracil.. Functionally, excises ethenocytosine and uracil, which can arise by alkylation or deamination of cytosine, respectively, from the corresponding mispairs with guanine in ds-DNA. It is capable of hydrolyzing the carbon-nitrogen bond between the sugar-phosphate backbone of the DNA and the mispaired base. The complementary strand guanine functions in substrate recognition. Required for DNA damage lesion repair in stationary-phase cells. This chain is G/U mismatch-specific DNA glycosylase, found in Citrobacter koseri (strain ATCC BAA-895 / CDC 4225-83 / SGSC4696).